The chain runs to 219 residues: Vesicle-associated membrane protein 721 (219 aa).

The Cytoplasmic segment spans residues 1–196 (MAQQSLIYSF…MWLQNMKIKL (196 aa)). The Longin domain occupies 10-114 (FVARGTVILV…SLNKEFGSKL (105 aa)). The 61-residue stretch at 130–190 (KLAKVKAQVS…TQMRRKMWLQ (61 aa)) folds into the v-SNARE coiled-coil homology domain. The chain crosses the membrane as a helical; Anchor for type IV membrane protein span at residues 197–217 (IVLAIIIALILIIVLSVCHGF). The Vesicular segment spans residues 218–219 (KC).

The protein belongs to the synaptobrevin family. As to expression, expressed in flowers, leaves, stems and roots.

It localises to the cell membrane. Its subcellular location is the early endosome membrane. In terms of biological role, involved in the targeting and/or fusion of transport vesicles to their target membrane. This chain is Vesicle-associated membrane protein 721, found in Arabidopsis thaliana (Mouse-ear cress).